A 452-amino-acid chain; its full sequence is Trigger factor (452 aa).

One can recognise a PPIase FKBP-type domain in the interval 162 to 247; that stretch reads GDTVTIDYKG…IHEVKSKQLP (86 aa). Residues 427–452 form a disordered region; sequence AKAKLEAKEAEEAEDKEEAEDKKENK.

Belongs to the FKBP-type PPIase family. Tig subfamily.

It localises to the cytoplasm. It carries out the reaction [protein]-peptidylproline (omega=180) = [protein]-peptidylproline (omega=0). Functionally, involved in protein export. Acts as a chaperone by maintaining the newly synthesized protein in an open conformation. Functions as a peptidyl-prolyl cis-trans isomerase. The sequence is that of Trigger factor from Lactobacillus helveticus (strain DPC 4571).